The sequence spans 140 residues: Large ribosomal subunit protein uL11 (140 aa).

This sequence belongs to the universal ribosomal protein uL11 family. Part of the ribosomal stalk of the 50S ribosomal subunit. Interacts with L10 and the large rRNA to form the base of the stalk. L10 forms an elongated spine to which L12 dimers bind in a sequential fashion forming a multimeric L10(L12)X complex. Post-translationally, one or more lysine residues are methylated.

In terms of biological role, forms part of the ribosomal stalk which helps the ribosome interact with GTP-bound translation factors. This chain is Large ribosomal subunit protein uL11, found in Brachyspira hyodysenteriae (strain ATCC 49526 / WA1).